A 664-amino-acid chain; its full sequence is Metal-nicotianamine transporter YSL2 (664 aa).

A run of 14 helical transmembrane segments spans residues 31–51 (ITVRAIVASLLIGIVYSVICL), 55–75 (LTTGLVPNLNISSALLAFVFL), 103–123 (CAVACYSISLAGGFASYLLGL), 147–167 (GVGWMTSFLFVTSFIGLVVLV), 209–229 (GFIKSFGLSFFWAFFGWFYSG), 268–288 (LVNLSLLFGAILSWGIMWPLI), 314–334 (FICIALILGDGLYNFVKILFF), 378–398 (IPLWMACVGYLFFSLVSIIAI), 409–429 (FVLVAYLLAPSLSFCNAYGAG), 457–477 (VVAGMVACGLIKSIVSVSADL), 496–516 (VAQAIGTAIGCVVAPLTFFLF), 549–569 (SALPKHCLELCYGFFAFAVAA), 594–614 (FLVGGSFAIDMCIGSLVVYVW), and 629–649 (VASGLICGDGLWILPSSLLAL).

It belongs to the YSL (TC 2.A.67.2) family. As to expression, expressed in roots, leaves and weakly in shoots. Restricted to the veins, to the central cylinder of the young roots and to the pericycle and the endodermis cells facing the meta-xylem tubes in older roots. Expressed in the vasculature of sepals, petals, anthers, stigma and siliques, but not in developing seeds or in meristematic zones.

Its subcellular location is the cell membrane. In terms of biological role, may be involved in the lateral transport of nicotianamine-chelated metals in the vasculature. This Arabidopsis thaliana (Mouse-ear cress) protein is Metal-nicotianamine transporter YSL2 (YSL2).